A 259-amino-acid chain; its full sequence is Hydroxyacylglutathione hydrolase (259 aa).

Zn(2+)-binding residues include His-56, His-58, Asp-60, His-61, His-112, Asp-133, and His-171.

Belongs to the metallo-beta-lactamase superfamily. Glyoxalase II family. Monomer. Zn(2+) serves as cofactor.

It carries out the reaction an S-(2-hydroxyacyl)glutathione + H2O = a 2-hydroxy carboxylate + glutathione + H(+). It participates in secondary metabolite metabolism; methylglyoxal degradation; (R)-lactate from methylglyoxal: step 2/2. Functionally, thiolesterase that catalyzes the hydrolysis of S-D-lactoyl-glutathione to form glutathione and D-lactic acid. This Pseudomonas putida (strain W619) protein is Hydroxyacylglutathione hydrolase.